Reading from the N-terminus, the 71-residue chain is V-type proton ATPase subunit e (71 aa).

The Lumenal segment spans residues 1–2; it reads MS. Residues 3–23 form a helical membrane-spanning segment; it reads FFHVVFVAFVIAAIGAAGWFV. Topologically, residues 24–35 are cytoplasmic; that stretch reads TPKGKNQTLLRT. A helical transmembrane segment spans residues 36 to 56; it reads SLLLTLTCCYLMWAITYLCQL. The Lumenal segment spans residues 57–71; the sequence is HPLITPRRSDLRMEY.

Belongs to the V-ATPase e1/e2 subunit family. In terms of assembly, V-ATPase is a heteromultimeric enzyme composed of a peripheral catalytic V1 complex (components A to H) attached to an integral membrane V0 proton pore complex (components: a, c, c', c'', d, e, f and VOA1).

The protein resides in the vacuole membrane. Functionally, subunit of the V0 complex of vacuolar(H+)-ATPase (V-ATPase), a multisubunit enzyme composed of a peripheral complex (V1) that hydrolyzes ATP and a membrane integral complex (V0) that translocates protons. V-ATPase is responsible for acidifying and maintaining the pH of intracellular compartments. In Cryptococcus neoformans var. neoformans serotype D (strain JEC21 / ATCC MYA-565) (Filobasidiella neoformans), this protein is V-type proton ATPase subunit e (VMA9).